The sequence spans 426 residues: 3-phosphoshikimate 1-carboxyvinyltransferase (426 aa).

3-phosphoshikimate-binding residues include lysine 23, serine 24, and arginine 28. Lysine 23 is a phosphoenolpyruvate binding site. The phosphoenolpyruvate site is built by glycine 96 and arginine 124. 3-phosphoshikimate is bound by residues threonine 170, serine 171, glutamine 172, serine 198, aspartate 314, and lysine 341. Glutamine 172 is a binding site for phosphoenolpyruvate. Aspartate 314 (proton acceptor) is an active-site residue. Phosphoenolpyruvate contacts are provided by arginine 345, arginine 386, and lysine 411.

The protein belongs to the EPSP synthase family. Monomer.

Its subcellular location is the cytoplasm. It catalyses the reaction 3-phosphoshikimate + phosphoenolpyruvate = 5-O-(1-carboxyvinyl)-3-phosphoshikimate + phosphate. The protein operates within metabolic intermediate biosynthesis; chorismate biosynthesis; chorismate from D-erythrose 4-phosphate and phosphoenolpyruvate: step 6/7. Functionally, catalyzes the transfer of the enolpyruvyl moiety of phosphoenolpyruvate (PEP) to the 5-hydroxyl of shikimate-3-phosphate (S3P) to produce enolpyruvyl shikimate-3-phosphate and inorganic phosphate. In Trichormus variabilis (strain ATCC 29413 / PCC 7937) (Anabaena variabilis), this protein is 3-phosphoshikimate 1-carboxyvinyltransferase.